The primary structure comprises 432 residues: Glutamate-1-semialdehyde 2,1-aminomutase 2 (432 aa).

Lys268 carries the N6-(pyridoxal phosphate)lysine modification.

It belongs to the class-III pyridoxal-phosphate-dependent aminotransferase family. HemL subfamily. As to quaternary structure, homodimer. Pyridoxal 5'-phosphate is required as a cofactor.

The protein resides in the cytoplasm. It carries out the reaction (S)-4-amino-5-oxopentanoate = 5-aminolevulinate. It participates in porphyrin-containing compound metabolism; protoporphyrin-IX biosynthesis; 5-aminolevulinate from L-glutamyl-tRNA(Glu): step 2/2. This chain is Glutamate-1-semialdehyde 2,1-aminomutase 2, found in Listeria innocua serovar 6a (strain ATCC BAA-680 / CLIP 11262).